The sequence spans 401 residues: Bifunctional enzyme IspD/IspF (401 aa).

The interval 1 to 234 (MQKPPRTAAI…SRLTAALGDI (234 aa)) is 2-C-methyl-D-erythritol 4-phosphate cytidylyltransferase. The segment at 235-401 (RTGTGYDVHA…SPWGAEGQAS (167 aa)) is 2-C-methyl-D-erythritol 2,4-cyclodiphosphate synthase. Residues Asp-241 and His-243 each coordinate a divalent metal cation. 4-CDP-2-C-methyl-D-erythritol 2-phosphate contacts are provided by residues 241-243 (DVH) and 267-268 (HS). A divalent metal cation is bound at residue His-275. Residues 289–291 (DIG), 365–368 (TTSE), Phe-372, and Arg-375 each bind 4-CDP-2-C-methyl-D-erythritol 2-phosphate.

It in the N-terminal section; belongs to the IspD/TarI cytidylyltransferase family. IspD subfamily. In the C-terminal section; belongs to the IspF family. A divalent metal cation is required as a cofactor.

The enzyme catalyses 2-C-methyl-D-erythritol 4-phosphate + CTP + H(+) = 4-CDP-2-C-methyl-D-erythritol + diphosphate. It catalyses the reaction 4-CDP-2-C-methyl-D-erythritol 2-phosphate = 2-C-methyl-D-erythritol 2,4-cyclic diphosphate + CMP. It functions in the pathway isoprenoid biosynthesis; isopentenyl diphosphate biosynthesis via DXP pathway; isopentenyl diphosphate from 1-deoxy-D-xylulose 5-phosphate: step 2/6. It participates in isoprenoid biosynthesis; isopentenyl diphosphate biosynthesis via DXP pathway; isopentenyl diphosphate from 1-deoxy-D-xylulose 5-phosphate: step 4/6. Its function is as follows. Bifunctional enzyme that catalyzes the formation of 4-diphosphocytidyl-2-C-methyl-D-erythritol from CTP and 2-C-methyl-D-erythritol 4-phosphate (MEP) (IspD), and catalyzes the conversion of 4-diphosphocytidyl-2-C-methyl-D-erythritol 2-phosphate (CDP-ME2P) to 2-C-methyl-D-erythritol 2,4-cyclodiphosphate (ME-CPP) with a corresponding release of cytidine 5-monophosphate (CMP) (IspF). This is Bifunctional enzyme IspD/IspF from Rhodopseudomonas palustris (strain HaA2).